The following is a 707-amino-acid chain: Protein kinase C-like 1B (707 aa).

Residues M1–V114 enclose the C2 domain. 2 consecutive Phorbol-ester/DAG-type zinc fingers follow at residues G170–C220 and P248–C298. Positions S323–V368 are disordered. Polar residues predominate over residues M330–A365. Positions F378–F638 constitute a Protein kinase domain. Residues L384–V392 and K407 each bind ATP. The Proton acceptor role is filled by D502. Positions R639 to Y707 constitute an AGC-kinase C-terminal domain.

Belongs to the protein kinase superfamily. AGC Ser/Thr protein kinase family. PKC subfamily. In terms of tissue distribution, expressed selectively in neurons that receive, transmit and process environmental signals.

Its subcellular location is the membrane. It is found in the cytoplasm. It localises to the cytoskeleton. It carries out the reaction L-seryl-[protein] + ATP = O-phospho-L-seryl-[protein] + ADP + H(+). The catalysed reaction is L-threonyl-[protein] + ATP = O-phospho-L-threonyl-[protein] + ADP + H(+). Functionally, PKC is activated by diacylglycerol which in turn phosphorylates a range of cellular proteins. PKC also serves as the receptor for phorbol esters, a class of tumor promoters. Involved in neuropeptide secretion in motor axons. Likely to act via the extracellular signal-regulated kinase/mitogen-activated protein kinase (ERK/MAPK) pathway in the signaling response to various sensory neurons; temperature, odor, taste, and osmolality. Its role in regulation differs depending on the neuron in which it is acting; thermosensation in AFD neurons, osmolality in ASH neurons, olfactory perception in AWA and AWC neurons. Promotes dauer formation mediated by the insulin/IGF pathway. Required for resistance to antimitotic toxins. The polypeptide is Protein kinase C-like 1B (Caenorhabditis elegans).